A 184-amino-acid polypeptide reads, in one-letter code: ATP synthase subunit delta (184 aa).

It belongs to the ATPase delta chain family. In terms of assembly, F-type ATPases have 2 components, F(1) - the catalytic core - and F(0) - the membrane proton channel. F(1) has five subunits: alpha(3), beta(3), gamma(1), delta(1), epsilon(1). F(0) has three main subunits: a(1), b(2) and c(10-14). The alpha and beta chains form an alternating ring which encloses part of the gamma chain. F(1) is attached to F(0) by a central stalk formed by the gamma and epsilon chains, while a peripheral stalk is formed by the delta and b chains.

The protein resides in the cell membrane. In terms of biological role, f(1)F(0) ATP synthase produces ATP from ADP in the presence of a proton or sodium gradient. F-type ATPases consist of two structural domains, F(1) containing the extramembraneous catalytic core and F(0) containing the membrane proton channel, linked together by a central stalk and a peripheral stalk. During catalysis, ATP synthesis in the catalytic domain of F(1) is coupled via a rotary mechanism of the central stalk subunits to proton translocation. Its function is as follows. This protein is part of the stalk that links CF(0) to CF(1). It either transmits conformational changes from CF(0) to CF(1) or is implicated in proton conduction. The sequence is that of ATP synthase subunit delta from Amoebophilus asiaticus (strain 5a2).